The sequence spans 576 residues: Sulfite reductase [NADPH] hemoprotein beta-component (576 aa).

Over residues 1–12 (MDAKTQPDRSRD) the composition is skewed to basic and acidic residues. The interval 1 to 26 (MDAKTQPDRSRDVSQPLDKLGPDETL) is disordered. Positions 441, 447, 486, and 490 each coordinate [4Fe-4S] cluster. Residue C490 participates in siroheme binding.

This sequence belongs to the nitrite and sulfite reductase 4Fe-4S domain family. Alpha(8)-beta(8). The alpha component is a flavoprotein, the beta component is a hemoprotein. Requires siroheme as cofactor. It depends on [4Fe-4S] cluster as a cofactor.

The enzyme catalyses hydrogen sulfide + 3 NADP(+) + 3 H2O = sulfite + 3 NADPH + 4 H(+). It participates in sulfur metabolism; hydrogen sulfide biosynthesis; hydrogen sulfide from sulfite (NADPH route): step 1/1. Component of the sulfite reductase complex that catalyzes the 6-electron reduction of sulfite to sulfide. This is one of several activities required for the biosynthesis of L-cysteine from sulfate. The protein is Sulfite reductase [NADPH] hemoprotein beta-component of Nitrobacter winogradskyi (strain ATCC 25391 / DSM 10237 / CIP 104748 / NCIMB 11846 / Nb-255).